A 125-amino-acid chain; its full sequence is Large ribosomal subunit protein bL12 (125 aa).

Belongs to the bacterial ribosomal protein bL12 family. Homodimer. Part of the ribosomal stalk of the 50S ribosomal subunit. Forms a multimeric L10(L12)X complex, where L10 forms an elongated spine to which 2 to 4 L12 dimers bind in a sequential fashion. Binds GTP-bound translation factors.

Functionally, forms part of the ribosomal stalk which helps the ribosome interact with GTP-bound translation factors. Is thus essential for accurate translation. This chain is Large ribosomal subunit protein bL12, found in Campylobacter jejuni subsp. jejuni serotype O:6 (strain 81116 / NCTC 11828).